The sequence spans 401 residues: Exodeoxyribonuclease 7 large subunit (401 aa).

It belongs to the XseA family. In terms of assembly, heterooligomer composed of large and small subunits.

The protein localises to the cytoplasm. It catalyses the reaction Exonucleolytic cleavage in either 5'- to 3'- or 3'- to 5'-direction to yield nucleoside 5'-phosphates.. Functionally, bidirectionally degrades single-stranded DNA into large acid-insoluble oligonucleotides, which are then degraded further into small acid-soluble oligonucleotides. The polypeptide is Exodeoxyribonuclease 7 large subunit (Lachnoclostridium phytofermentans (strain ATCC 700394 / DSM 18823 / ISDg) (Clostridium phytofermentans)).